Here is a 456-residue protein sequence, read N- to C-terminus: Ribosomal protein uS12 methylthiotransferase RimO (456 aa).

The MTTase N-terminal domain maps to 11 to 126; that stretch reads PKVGFVSLGC…VMQAVHTHLP (116 aa). Residues C20, C56, C85, C157, C161, and C164 each coordinate [4Fe-4S] cluster. In terms of domain architecture, Radical SAM core spans 143–384; that stretch reads LTPKHYAYLK…MEVAEEVSAR (242 aa). In terms of domain architecture, TRAM spans 387 to 456; the sequence is QRKVGQTLRV…DGHDLWGEVA (70 aa).

Belongs to the methylthiotransferase family. RimO subfamily. It depends on [4Fe-4S] cluster as a cofactor.

The protein resides in the cytoplasm. It carries out the reaction L-aspartate(89)-[ribosomal protein uS12]-hydrogen + (sulfur carrier)-SH + AH2 + 2 S-adenosyl-L-methionine = 3-methylsulfanyl-L-aspartate(89)-[ribosomal protein uS12]-hydrogen + (sulfur carrier)-H + 5'-deoxyadenosine + L-methionine + A + S-adenosyl-L-homocysteine + 2 H(+). Functionally, catalyzes the methylthiolation of an aspartic acid residue of ribosomal protein uS12. This is Ribosomal protein uS12 methylthiotransferase RimO from Cupriavidus metallidurans (strain ATCC 43123 / DSM 2839 / NBRC 102507 / CH34) (Ralstonia metallidurans).